Consider the following 133-residue polypeptide: Small ribosomal subunit protein uS8 (133 aa).

This sequence belongs to the universal ribosomal protein uS8 family. As to quaternary structure, part of the 30S ribosomal subunit. Contacts proteins S5 and S12.

Its function is as follows. One of the primary rRNA binding proteins, it binds directly to 16S rRNA central domain where it helps coordinate assembly of the platform of the 30S subunit. This Synechocystis sp. (strain ATCC 27184 / PCC 6803 / Kazusa) protein is Small ribosomal subunit protein uS8.